Consider the following 88-residue polypeptide: Large ribosomal subunit protein bL27 (88 aa).

The protein belongs to the bacterial ribosomal protein bL27 family.

In Mycolicibacterium smegmatis (strain ATCC 700084 / mc(2)155) (Mycobacterium smegmatis), this protein is Large ribosomal subunit protein bL27.